The following is a 570-amino-acid chain: Sulfite reductase [NADPH] hemoprotein beta-component (570 aa).

Residues Cys-434, Cys-440, Cys-479, and Cys-483 each contribute to the [4Fe-4S] cluster site. Residue Cys-483 participates in siroheme binding.

It belongs to the nitrite and sulfite reductase 4Fe-4S domain family. Alpha(8)-beta(8). The alpha component is a flavoprotein, the beta component is a hemoprotein. The cofactor is siroheme. [4Fe-4S] cluster is required as a cofactor.

It catalyses the reaction hydrogen sulfide + 3 NADP(+) + 3 H2O = sulfite + 3 NADPH + 4 H(+). Its pathway is sulfur metabolism; hydrogen sulfide biosynthesis; hydrogen sulfide from sulfite (NADPH route): step 1/1. Component of the sulfite reductase complex that catalyzes the 6-electron reduction of sulfite to sulfide. This is one of several activities required for the biosynthesis of L-cysteine from sulfate. The polypeptide is Sulfite reductase [NADPH] hemoprotein beta-component (Salmonella enteritidis PT4 (strain P125109)).